The sequence spans 1231 residues: Pesticidal crystal protein Cry1Bd (1231 aa).

The protein belongs to the delta endotoxin family.

In terms of biological role, promotes colloidosmotic lysis by binding to the midgut epithelial cells of lepidopteran larvae. Toxic to Plutella xylostella. This chain is Pesticidal crystal protein Cry1Bd (cry1Bd), found in Bacillus thuringiensis subsp. wuhanensis.